The following is a 116-amino-acid chain: Large ribosomal subunit protein bL19 (116 aa).

It belongs to the bacterial ribosomal protein bL19 family.

In terms of biological role, this protein is located at the 30S-50S ribosomal subunit interface and may play a role in the structure and function of the aminoacyl-tRNA binding site. This Actinobacillus pleuropneumoniae serotype 5b (strain L20) protein is Large ribosomal subunit protein bL19.